The following is a 279-amino-acid chain: Shikimate dehydrogenase (NADP(+)) (279 aa).

Shikimate-binding positions include 21–23 (SRS) and threonine 68. Catalysis depends on lysine 72, which acts as the Proton acceptor. An NADP(+)-binding site is contributed by aspartate 83. 2 residues coordinate shikimate: asparagine 92 and aspartate 107. NADP(+)-binding positions include 132–136 (GAGGA), 156–161 (NRTVER), and leucine 221. Tyrosine 223 contacts shikimate. Glycine 244 lines the NADP(+) pocket.

Belongs to the shikimate dehydrogenase family. In terms of assembly, homodimer.

The enzyme catalyses shikimate + NADP(+) = 3-dehydroshikimate + NADPH + H(+). It functions in the pathway metabolic intermediate biosynthesis; chorismate biosynthesis; chorismate from D-erythrose 4-phosphate and phosphoenolpyruvate: step 4/7. In terms of biological role, involved in the biosynthesis of the chorismate, which leads to the biosynthesis of aromatic amino acids. Catalyzes the reversible NADPH linked reduction of 3-dehydroshikimate (DHSA) to yield shikimate (SA). In Nitrobacter winogradskyi (strain ATCC 25391 / DSM 10237 / CIP 104748 / NCIMB 11846 / Nb-255), this protein is Shikimate dehydrogenase (NADP(+)).